Consider the following 303-residue polypeptide: Phytochrome-associated serine/threonine-protein phosphatase 1 (303 aa).

Zn(2+)-binding residues include D50, H52, D78, and N110. H111 functions as the Proton donor in the catalytic mechanism. Residues H160 and H234 each contribute to the Zn(2+) site.

This sequence belongs to the PPP phosphatase family. PP-6 (PP-V) subfamily. As to quaternary structure, interacts with PHYA and PHYB, mostly when they are phosphorylated and in Pfr forms. Interacts with TAP46. Interacts with PIN1 and PIN2. Interacts with ABI5. Interacts with PIF3 and PIF4. Protein phosphatase 6 (PP6) holoenzyme is a heterotrimeric complex formed by the catalytic subunit FYPP, a SAPS domain-containing subunit (SAL) and a protein phosphatase 2A regulatory subunit A (PP2AA). It depends on Zn(2+) as a cofactor. Mostly expressed in flowers. Also detected to a lower extent in stems and leaves. Expressed in roots.

It localises to the cytoplasm. The enzyme catalyses O-phospho-L-seryl-[protein] + H2O = L-seryl-[protein] + phosphate. It carries out the reaction O-phospho-L-threonyl-[protein] + H2O = L-threonyl-[protein] + phosphate. In terms of biological role, catalytic subunit of protein phosphatase 6 (PP6). Dephosphorylates phosphorylated phytochromes, with a preference toward Pfr forms. Plays a major role in the photoperiodic control of flowering time in long days by modulating phytochrome signals in flowering time control. Involved in the regulation of polar auxin transport in roots. Dephosphorylates directly the auxin efflux carriers PIN1 and PIN2, thus promoting their proper polar localization in root cell plasma membrane. Acts antagonistically with the protein kinase PID to regulate the reversible phosphorylation of PIN and polar targeting, subsequently impacting polar auxin transport and plant development. Involved in the regulation of abscisic acid (ABA) signaling during seed germination and postgermination seedling growth. Functions as a negative regulator of ABA signaling through direct dephosphorylation and destabilization of ABI5. Acts antagonistically with the protein kinase SRK2E/SNRK2.6 to regulate ABI5 phosphorylation and ABA responses. Involved in the regulation of phosphorylation status in hypocotyl phototropism. Involved in the negative regulation of photomorphogenesis by controlling the stability and transcriptional activity of PIF3 and PIF4 proteins in the dark, via the regulation of their phosphorylation status. This is Phytochrome-associated serine/threonine-protein phosphatase 1 from Arabidopsis thaliana (Mouse-ear cress).